Reading from the N-terminus, the 515-residue chain is Maturase K (515 aa).

This sequence belongs to the intron maturase 2 family. MatK subfamily.

The protein resides in the plastid. The protein localises to the chloroplast. Its function is as follows. Usually encoded in the trnK tRNA gene intron. Probably assists in splicing its own and other chloroplast group II introns. The polypeptide is Maturase K (Pinus leiophylla (Chihuahua pine)).